We begin with the raw amino-acid sequence, 127 residues long: Snaclec CHH-B subunit alpha (127 aa).

Cystine bridges form between Cys4-Cys15, Cys32-Cys120, and Cys95-Cys112. Residues 11–121 (YDRYCYKPFK…CEQQHSFICK (111 aa)) enclose the C-type lectin domain.

This sequence belongs to the snaclec family. As to quaternary structure, heterodimer of subunits alpha and beta; disulfide-linked. In terms of tissue distribution, expressed by the venom gland.

It is found in the secreted. Functionally, binds to the subunit GPIbalpha (GP1BA) of the platelet GPIb/V/IX receptor system. It inhibits ristocetin- and vWF-induced platelet aggregation in platelet-rich plasma by inhibiting the binding of vWF to GPIbalpha. This is Snaclec CHH-B subunit alpha from Crotalus horridus (Timber rattlesnake).